A 214-amino-acid polypeptide reads, in one-letter code: 3,4-dihydroxy-2-butanone 4-phosphate synthase (214 aa).

Residues 40–41, Asp-45, 153–157, and Glu-177 contribute to the D-ribulose 5-phosphate site; these read RE and RRGHT. Position 41 (Glu-41) interacts with Mg(2+). Mg(2+) is bound at residue His-156.

It belongs to the DHBP synthase family. As to quaternary structure, homodimer. Mg(2+) is required as a cofactor. Requires Mn(2+) as cofactor.

It carries out the reaction D-ribulose 5-phosphate = (2S)-2-hydroxy-3-oxobutyl phosphate + formate + H(+). The protein operates within cofactor biosynthesis; riboflavin biosynthesis; 2-hydroxy-3-oxobutyl phosphate from D-ribulose 5-phosphate: step 1/1. Catalyzes the conversion of D-ribulose 5-phosphate to formate and 3,4-dihydroxy-2-butanone 4-phosphate. This chain is 3,4-dihydroxy-2-butanone 4-phosphate synthase, found in Rhodospirillum rubrum (strain ATCC 11170 / ATH 1.1.1 / DSM 467 / LMG 4362 / NCIMB 8255 / S1).